Consider the following 439-residue polypeptide: C4-dicarboxylate transport protein (439 aa).

Transmembrane regions (helical) follow at residues 9-29 (SLYA…HFLP), 45-65 (LIKM…IAGM), 77-97 (LALL…LIIV), 145-165 (AFAK…GFAL), 185-205 (VLFT…FGAM), 223-243 (LMGA…GIVT), 290-310 (VVGL…AIYL), 332-352 (TLLA…GSGF), and 353-373 (IVLA…LALI). The tract at residues 417 to 439 (NESPQAADQPEKILDQTNTKLGA) is disordered.

This sequence belongs to the dicarboxylate/amino acid:cation symporter (DAACS) (TC 2.A.23) family.

It is found in the cell inner membrane. Its function is as follows. Responsible for the transport of dicarboxylates such as succinate, fumarate, and malate from the periplasm across the membrane. In Janthinobacterium sp. (strain Marseille) (Minibacterium massiliensis), this protein is C4-dicarboxylate transport protein.